We begin with the raw amino-acid sequence, 376 residues long: 23S rRNA (uracil(747)-C(5))-methyltransferase RlmC (376 aa).

Positions 3, 11, 14, and 87 each coordinate [4Fe-4S] cluster. 4 residues coordinate S-adenosyl-L-methionine: Gln212, Phe241, Glu262, and Asn307. The active-site Nucleophile is Cys334.

The protein belongs to the class I-like SAM-binding methyltransferase superfamily. RNA M5U methyltransferase family. RlmC subfamily.

The enzyme catalyses uridine(747) in 23S rRNA + S-adenosyl-L-methionine = 5-methyluridine(747) in 23S rRNA + S-adenosyl-L-homocysteine + H(+). Functionally, catalyzes the formation of 5-methyl-uridine at position 747 (m5U747) in 23S rRNA. The sequence is that of 23S rRNA (uracil(747)-C(5))-methyltransferase RlmC from Yersinia pseudotuberculosis serotype O:1b (strain IP 31758).